The sequence spans 94 residues: Integration host factor subunit beta (94 aa).

It belongs to the bacterial histone-like protein family. In terms of assembly, heterodimer of an alpha and a beta chain.

This protein is one of the two subunits of integration host factor, a specific DNA-binding protein that functions in genetic recombination as well as in transcriptional and translational control. In Azorhizobium caulinodans (strain ATCC 43989 / DSM 5975 / JCM 20966 / LMG 6465 / NBRC 14845 / NCIMB 13405 / ORS 571), this protein is Integration host factor subunit beta.